The following is a 359-amino-acid chain: Heme A synthase (359 aa).

The next 6 helical transmembrane spans lie at 23-43, 85-105, 109-129, 137-157, 172-192, and 212-232; these read AVAF…VLGG, YAAL…FFEW, LLGR…WLRG, LKLL…WWMV, LAIH…LAAS, and AGLI…VAGL. Heme is bound at residue His-276. Transmembrane regions (helical) follow at residues 278 to 298, 308 to 328, and 329 to 349; these read MVAY…SGTL, IALL…LVLV, and VPLW…GMAV. His-337 is a heme binding site.

This sequence belongs to the COX15/CtaA family. Type 2 subfamily. As to quaternary structure, interacts with CtaB. Requires heme b as cofactor.

Its subcellular location is the cell membrane. It catalyses the reaction Fe(II)-heme o + 2 A + H2O = Fe(II)-heme a + 2 AH2. The protein operates within porphyrin-containing compound metabolism; heme A biosynthesis; heme A from heme O: step 1/1. Its function is as follows. Catalyzes the conversion of heme O to heme A by two successive hydroxylations of the methyl group at C8. The first hydroxylation forms heme I, the second hydroxylation results in an unstable dihydroxymethyl group, which spontaneously dehydrates, resulting in the formyl group of heme A. The polypeptide is Heme A synthase (Beijerinckia indica subsp. indica (strain ATCC 9039 / DSM 1715 / NCIMB 8712)).